A 231-amino-acid chain; its full sequence is 7-cyano-7-deazaguanine synthase (231 aa).

Residue 8–18 participates in ATP binding; it reads FSGGQDSTTCL. Cys-188, Cys-197, Cys-200, and Cys-203 together coordinate Zn(2+).

The protein belongs to the QueC family. Zn(2+) serves as cofactor.

The enzyme catalyses 7-carboxy-7-deazaguanine + NH4(+) + ATP = 7-cyano-7-deazaguanine + ADP + phosphate + H2O + H(+). Its pathway is purine metabolism; 7-cyano-7-deazaguanine biosynthesis. In terms of biological role, catalyzes the ATP-dependent conversion of 7-carboxy-7-deazaguanine (CDG) to 7-cyano-7-deazaguanine (preQ(0)). The chain is 7-cyano-7-deazaguanine synthase from Cronobacter sakazakii (strain ATCC BAA-894) (Enterobacter sakazakii).